A 190-amino-acid polypeptide reads, in one-letter code: Protein FAM210B, mitochondrial (190 aa).

Residues 1-58 (MAGLLTLLGPAGRVSTRLRPLAPWLLGTATSCAPPLWALALSHPVPDARLLRTARGDC) constitute a mitochondrion transit peptide. The span at 56–66 (GDCLSRQEPNR) shows a compositional bias: basic and acidic residues. A disordered region spans residues 56-81 (GDCLSRQEPNRTPEPGGSVTGTEKKL). Residues 78 to 189 (EKKLSRTQQL…VGLFKPPATK (112 aa)) enclose the DUF1279 domain. A run of 2 helical transmembrane segments spans residues 97-117 (VGVSMHIGISLVSLGIFYTVV) and 148-168 (FVVAYAIHKLFAPVRISITLV).

This sequence belongs to the FAM210 family. As to expression, expressed in late erythroblast differentiation stages.

The protein resides in the mitochondrion. Its subcellular location is the mitochondrion outer membrane. Its function is as follows. Plays a role in erythroid differentiation. Involved in cell proliferation and tumor cell growth suppression. Involved in the metabolic reprogramming of cancer cells in a PDK4-dependent manner. The polypeptide is Protein FAM210B, mitochondrial (Mus musculus (Mouse)).